We begin with the raw amino-acid sequence, 237 residues long: DNA repair protein RecO (237 aa).

The protein belongs to the RecO family.

Functionally, involved in DNA repair and RecF pathway recombination. The chain is DNA repair protein RecO from Rickettsia peacockii (strain Rustic).